The following is a 106-amino-acid chain: L-rhamnose mutarotase (106 aa).

Residue Tyr-20 participates in substrate binding. The active-site Proton donor is the His-24. Substrate is bound by residues Tyr-43 and 78 to 79 (WW).

This sequence belongs to the rhamnose mutarotase family. Homodimer.

Its subcellular location is the cytoplasm. It carries out the reaction alpha-L-rhamnose = beta-L-rhamnose. It functions in the pathway carbohydrate metabolism; L-rhamnose metabolism. Involved in the anomeric conversion of L-rhamnose. This Brucella anthropi (strain ATCC 49188 / DSM 6882 / CCUG 24695 / JCM 21032 / LMG 3331 / NBRC 15819 / NCTC 12168 / Alc 37) (Ochrobactrum anthropi) protein is L-rhamnose mutarotase.